The following is a 447-amino-acid chain: MAQAEVLLTKEPAPQSIDVCELPQKKYEVACNTGAYTSAGLATAGFRTAKYLMDEWFQNSYARYHQAFADRDYSERQRHESKQLAAETGELAYRTQLDSTRRVGERLEDMHCWKSELQREIDELSSETDQMMAQKLRLQRALDALSVPFSIATDNLQCRERRQHPDLVRDYVEVELLKETELIRNIQELLKRTMGQAVGQIRLNREHKENCEINWSDKVEVYNIDDTCARYTNESTQVQFYPHSSKFEESASTPETWGKFTQDVLLRAERERLASVNLRKLIDCILRDTAEDLRLQCDAVNLAFSNRCEELNDARQKLQYHLLKILSEITDQEHQIAALKQAIKDKEAPLRVAQTRLYQRSHRPNVELCRDNAQFRLMSEVEELNMSLKVLKEKLQDAEQALRNLEDSRMSLEKDIAVKTNSLFIDRQKCMTHRNRYPSVLQLAGYQ.

3 coiled-coil regions span residues 114–143 (KSEL…RALD), 324–348 (KILS…DKEA), and 375–423 (FRLM…TNSL).

Belongs to the tektin family. Microtubule inner protein component of sperm flagellar doublet microtubules. Ubiquitinated, leading to its degradation. Deubiquitinated by USP16, promoting its stability.

Its subcellular location is the cytoplasm. It is found in the cytoskeleton. The protein localises to the cilium axoneme. The protein resides in the flagellum axoneme. Functionally, microtubule inner protein (MIP) part of the dynein-decorated doublet microtubules (DMTs) in cilia and flagellar axoneme. Forms filamentous polymers in the walls of ciliary and flagellar microtubules. Contributes to normal sperm motility. This is Tektin-4 (Tekt4) from Rattus norvegicus (Rat).